The sequence spans 415 residues: Queuine tRNA-ribosyltransferase accessory subunit 2 (415 aa).

Zn(2+) contacts are provided by Cys-351, Cys-353, Cys-356, and His-382.

Belongs to the queuine tRNA-ribosyltransferase family. QTRT2 subfamily. Heterodimer of a catalytic subunit QTRT1 and an accessory subunit QTRT2. Zn(2+) serves as cofactor.

The protein resides in the cytoplasm. Its subcellular location is the mitochondrion outer membrane. Functionally, non-catalytic subunit of the queuine tRNA-ribosyltransferase (TGT) that catalyzes the base-exchange of a guanine (G) residue with queuine (Q) at position 34 (anticodon wobble position) in tRNAs with GU(N) anticodons (tRNA-Asp, -Asn, -His and -Tyr), resulting in the hypermodified nucleoside queuosine (7-(((4,5-cis-dihydroxy-2-cyclopenten-1-yl)amino)methyl)-7-deazaguanosine). The polypeptide is Queuine tRNA-ribosyltransferase accessory subunit 2 (Homo sapiens (Human)).